A 517-amino-acid chain; its full sequence is Cytochrome P450 monooxygenase stcB (517 aa).

Position 461 (cysteine 461) interacts with heme.

This sequence belongs to the cytochrome P450 family. Heme serves as cofactor.

The protein operates within mycotoxin biosynthesis; sterigmatocystin biosynthesis. Functionally, cytochrome P450 monooxygenase; part of the gene cluster that mediates the biosynthesis of sterigmatocystin (ST), a polyketide-derived furanocoumarin which is part of the most toxic and carcinogenic compounds among the known mycotoxins. The first step in the biosynthesis of sterigmatocystin is the production of hexanoate by the fatty acid synthase (FAS) units stcJ and stcK. The polyketide backbone is assembled by the non-reducing polyketide synthase stcA by condensation of the starter hexanoyl-CoA and 7 malonyl-CoA extender units followed by cyclization and release of norsolorinic acid. Norsolorinic acid is the first stable intermediate in the biosynthesis of sterigmatocystin and is converted into averantin (AVN) by the ketoreductase stcE which reduces the hexanoate ketone to an alcohol. Averantin is then oxidized into 5'-hydroxyaverantin (HAVN) by the cytochrome P450 monooxygenase stcF. 5'-hydroxyaverantin is further converted to 5'-oxyaverantin (OAVN) by the 5'-hydroxyaverantin dehydrogenase stcG. The next step is the conversion of OAVN into averufin (AVF) which is catalyzed by a yet to be identified enzyme. The cytochrome P450 monooxygenase stcB and the flavin-binding monooxygenase stcW are both required for the conversion of averufin to 1-hydroxyversicolorone. The esterase stcI probably catalyzes the formation of versiconal hemiacetal acetate from 1-hydroxyversicolorone. The oxydoreductase stcN then probably catalyzes the biosynthetic step from versiconal to versicolorin B (VERB). The next step is performed by the versicolorin B desaturase stcL to produce versicolorin A (VERA). The ketoreductase stcU and the cytochrome P450 monooxygenase stcS are involved in the conversion of versicolorin A to demethylsterigmatocystin. The Baeyer-Villiger oxidas stcQ and the reductase stcR might be involved in the biosynthetic step from versicolorin A to demethylsterigmatocystin. The final step in the biosynthesis of sterigmatocystin is the methylation of demethylsterigmatocystin catalyzed by the methyltransferase stcP. This is Cytochrome P450 monooxygenase stcB from Emericella nidulans (strain FGSC A4 / ATCC 38163 / CBS 112.46 / NRRL 194 / M139) (Aspergillus nidulans).